Here is a 395-residue protein sequence, read N- to C-terminus: Putative carbonic anhydrase 1 (395 aa).

Residues 1-24 (MKLQGAGCVVAAVLGALFIVNVES) form the signal peptide. Positions 42–365 (ISYDVRSTIG…LNDRPVFLVR (324 aa)) constitute an Alpha-carbonic anhydrase domain. Residues His-139, His-141, and His-165 each coordinate Zn(2+).

The protein belongs to the alpha-carbonic anhydrase family. Zn(2+) serves as cofactor. Component of the acid-insoluble and acid-soluble organic matrix of calcified layers of the shell (at protein level).

It localises to the secreted. The catalysed reaction is hydrogencarbonate + H(+) = CO2 + H2O. Reversible hydration of carbon dioxide. This is Putative carbonic anhydrase 1 from Lottia gigantea (Giant owl limpet).